The primary structure comprises 442 residues: Glutamyl-tRNA(Gln) amidotransferase subunit A (442 aa).

Catalysis depends on charge relay system residues K50 and S125. The active-site Acyl-ester intermediate is S149.

It belongs to the amidase family. GatA subfamily. Heterotrimer of A, B and C subunits.

The enzyme catalyses L-glutamyl-tRNA(Gln) + L-glutamine + ATP + H2O = L-glutaminyl-tRNA(Gln) + L-glutamate + ADP + phosphate + H(+). In terms of biological role, allows the formation of correctly charged Gln-tRNA(Gln) through the transamidation of misacylated Glu-tRNA(Gln) in organisms which lack glutaminyl-tRNA synthetase. The reaction takes place in the presence of glutamine and ATP through an activated gamma-phospho-Glu-tRNA(Gln). The chain is Glutamyl-tRNA(Gln) amidotransferase subunit A from Nitratiruptor sp. (strain SB155-2).